A 337-amino-acid chain; its full sequence is tRNA N6-adenosine threonylcarbamoyltransferase (337 aa).

H114 and H118 together coordinate Fe cation. Substrate is bound by residues 136-140 (LVSGG), D169, G182, D186, and N275. D301 is a binding site for Fe cation.

The protein belongs to the KAE1 / TsaD family. Fe(2+) is required as a cofactor.

The protein resides in the cytoplasm. It catalyses the reaction L-threonylcarbamoyladenylate + adenosine(37) in tRNA = N(6)-L-threonylcarbamoyladenosine(37) in tRNA + AMP + H(+). In terms of biological role, required for the formation of a threonylcarbamoyl group on adenosine at position 37 (t(6)A37) in tRNAs that read codons beginning with adenine. Is involved in the transfer of the threonylcarbamoyl moiety of threonylcarbamoyl-AMP (TC-AMP) to the N6 group of A37, together with TsaE and TsaB. TsaD likely plays a direct catalytic role in this reaction. This is tRNA N6-adenosine threonylcarbamoyltransferase from Streptococcus thermophilus (strain ATCC BAA-491 / LMD-9).